The primary structure comprises 248 residues: Small ribosomal subunit protein eS1 (248 aa).

The disordered stretch occupies residues 1-21; it reads MAVGKDKRISKGKKGGKKKIV.

This sequence belongs to the eukaryotic ribosomal protein eS1 family. Component of the small ribosomal subunit. Mature ribosomes consist of a small (40S) and a large (60S) subunit. The 40S subunit contains about 33 different proteins and 1 molecule of RNA (18S). The 60S subunit contains about 49 different proteins and 3 molecules of RNA (25S, 5.8S and 5S).

It is found in the cytoplasm. The protein is Small ribosomal subunit protein eS1 of Syntrichia ruralis (Great hairy screw-moss).